The chain runs to 145 residues: Basic phospholipase A2 P'513 (145 aa).

The N-terminal stretch at 1–21 (MYPAHLLLLLAVCVSLLGASA) is a signal peptide. Residues 22 to 27 (IPPLPL) constitute a propeptide that is removed on maturation. Disulfide bonds link C38/C98, C54/C144, C56/C72, C71/C125, C78/C118, C87/C111, and C105/C116. Residues Y55, G57, and G59 each contribute to the Ca(2+) site. H75 is a catalytic residue. D76 provides a ligand contact to Ca(2+). D119 is a catalytic residue.

It belongs to the phospholipase A2 family. Group I subfamily. D49 sub-subfamily. Ca(2+) serves as cofactor. In terms of tissue distribution, expressed by the venom gland.

It localises to the secreted. The enzyme catalyses a 1,2-diacyl-sn-glycero-3-phosphocholine + H2O = a 1-acyl-sn-glycero-3-phosphocholine + a fatty acid + H(+). Its function is as follows. PLA2 catalyzes the calcium-dependent hydrolysis of the 2-acyl groups in 3-sn-phosphoglycerides. The polypeptide is Basic phospholipase A2 P'513 (Laticauda laticaudata (Blue-ringed sea krait)).